We begin with the raw amino-acid sequence, 492 residues long: GlcNAc-binding protein A (492 aa).

An N-terminal signal peptide occupies residues 1-23; it reads MNKSSTKTLIALSMMAVSSGVSA. In terms of domain architecture, Chitin-binding type-4 spans 24–204; the sequence is HGYVSETNDG…AFYNVIDVKF (181 aa). The Chitin-binding type-3 domain occupies 443–484; sequence AGTKVLAEDGNVYQCKEFPYSGYCVQWTETATNFAPGVGSDW.

This sequence belongs to the GbpA family.

It is found in the secreted. Its function is as follows. Probably interacts with GlcNAc residues. May promote attachment to both epithelial cell surfaces and chitin. This is GlcNAc-binding protein A from Aliivibrio fischeri (strain ATCC 700601 / ES114) (Vibrio fischeri).